The following is a 114-amino-acid chain: Protein ORF3 (114 aa).

Hydrophobic stretches follow at residues 6–22 and 33–53; these read CDLG…CLCC and AVVG…GLIL. The interaction with host HPX stretch occupies residues 28 to 68; sequence VSRLAAVVGGAAAVPAVVSGVTGLILSPSQSPIFIQPTPSP. Positions 48 to 72 are interaction with the capsid protein; it reads VTGLILSPSQSPIFIQPTPSPPMSP. Ser71 is modified (phosphoserine; by host). Positions 72 to 114 are homodimerization, and interaction with host AMBP/bikunin; it reads PLRPGLDLVFANQPDHSAPLGVTRPSAPPLPHVVDLPQLGPRR. The interval 91 to 114 is disordered; that stretch reads LGVTRPSAPPLPHVVDLPQLGPRR. An interaction with host SRC, HCK, FYN, PIK3R3 and GRB2 region spans residues 95–104; it reads RPSAPPLPHV. A PTAP/PSAP motif motif is present at residues 96–99; it reads PSAP.

The protein belongs to the hepevirus ORF3 protein family. In terms of assembly, forms homooligomers. Interacts with host SRC, HCK, FYN, PIK3R3 and GRB2 (via SH3 domain); binding does not activate the kinases. Interacts with host AMBP/bikunin and AMBP/alpha-1-microglobulin peptides. Interacts with host HPX/hemopexin. Interacts (when phosphorylated) with capsid protein ORF2. Interacts with host TSG101; this interaction plays a role in viral release from the host cell. Interacts with host SIRPA; this interaction down-regulates the phosphorylation of host IRF3. Palmitoylated in the N-terminus.

It is found in the host endoplasmic reticulum membrane. It localises to the host cytoplasm. Its subcellular location is the host cytoskeleton. The protein localises to the virion. The protein resides in the host cell membrane. In terms of biological role, small multifunctional phosphoprotein involved in virion morphogenesis, egress and counteracting host innate immunity. Plays critical roles in the final steps of viral release by interacting with host TSG101, a member of the vacuolar protein-sorting pathway and using other cellular host proteins involved in vesicle formation pathway. Also acts as a viroporin and forms ion conductive pores allowing viral particle release. Impairs the generation of type I interferon by down-regulating host TLR3 and TLR7 as well as their downstream signaling pathways. Down-regulates the phosphorylation of host IRF3 via the interaction with host SIRP-alpha, thereby inhibiting IFN-I expression. Interacts with host microtubules. In Homo sapiens (Human), this protein is Protein ORF3.